A 325-amino-acid chain; its full sequence is Cytochrome f (325 aa).

An N-terminal signal peptide occupies residues 1 to 40 (MSKINLSTMWSSFIKKIAKTILVAIACISLFLTSSPAANA). Residues tyrosine 41, cysteine 62, cysteine 65, and histidine 66 each contribute to the heme site. Residues 291 to 311 (VKWLMAFFALVMLAQIMLVLK) form a helical membrane-spanning segment.

It belongs to the cytochrome f family. As to quaternary structure, the 4 large subunits of the cytochrome b6-f complex are cytochrome b6, subunit IV (17 kDa polypeptide, PetD), cytochrome f and the Rieske protein, while the 4 small subunits are PetG, PetL, PetM and PetN. The complex functions as a dimer. Heme is required as a cofactor.

Its subcellular location is the cellular thylakoid membrane. In terms of biological role, component of the cytochrome b6-f complex, which mediates electron transfer between photosystem II (PSII) and photosystem I (PSI), cyclic electron flow around PSI, and state transitions. This chain is Cytochrome f, found in Trichodesmium erythraeum (strain IMS101).